The chain runs to 324 residues: Granaticin polyketide synthase bifunctional cyclase/dehydratase (324 aa).

The disordered stretch occupies residues 1–21 (MVQPAATPVSLPSPTVHRSEH).

It participates in antibiotic biosynthesis; granaticin biosynthesis. Functionally, is needed for correct cyclization of the oligoketide leading to isochromanequinone formation. This chain is Granaticin polyketide synthase bifunctional cyclase/dehydratase (gra-orf4), found in Streptomyces violaceoruber.